A 602-amino-acid polypeptide reads, in one-letter code: Elongation factor 4 (602 aa).

The tr-type G domain occupies 7–189; sequence ARLRNFCIIA…SVVDRIPPPK (183 aa). GTP is bound by residues 19–24 and 136–139; these read DHGKST and NKVD.

Belongs to the TRAFAC class translation factor GTPase superfamily. Classic translation factor GTPase family. LepA subfamily.

The protein resides in the cell inner membrane. It carries out the reaction GTP + H2O = GDP + phosphate + H(+). Its function is as follows. Required for accurate and efficient protein synthesis under certain stress conditions. May act as a fidelity factor of the translation reaction, by catalyzing a one-codon backward translocation of tRNAs on improperly translocated ribosomes. Back-translocation proceeds from a post-translocation (POST) complex to a pre-translocation (PRE) complex, thus giving elongation factor G a second chance to translocate the tRNAs correctly. Binds to ribosomes in a GTP-dependent manner. The polypeptide is Elongation factor 4 (Prochlorococcus marinus (strain SARG / CCMP1375 / SS120)).